The following is a 698-amino-acid chain: MSEQLPLLIELGTEELPVKALPGLAQAFFDGVLAGLEKRGVAVTRGDAKPLSTPRRLAVLLPGVATEQPEQRSEVLGPYLNIALDAEGKPTRALAGFAAKAGIDWTALERTSDAKGERFVHRAVTPGAQAAALLPEILREAIAAMPIPKPMRWGAHEYAFARPVQWLVLLFGDTVIPAELLGVRGDRITRGHRFMHDGDIALAAPGDYIDALRAAHVLVDADARRARIVEEVDAAARQAGGSARISDDNLEQVVNLVEWPSAVLCSFERAFLAVPQEALIETMEINQKFFPVLDDGGKLTEQFIGIANIVSKDVAEVAKGYERVIRPRFADAKFFFDEDLKQGLEAMGAGLASVTYQAKLGTVADKVARVAALAEAIAPQVGADPVQARRAAELAKNDLQSRMVNEFPELQGIAGRHYAKAAGEPSEISLAIDEAYQPRFAGDDIALSPLGKVLAIAERLDTLAGGFAAGLKPTGNKDPFALRRNALGLARTVIESGFDLDLPKLIDVGLASLPDAVKPHADRNTETVRADLYDFILDRLKGYYADKGVAATHFNAVAELTPASLYDFDRRIDAIGIFATLPEAEALAAANKRIRNILRKVEGEIPGDIDTTLLREPAEEALAEAVEAAIGDTGDALHRHDYVAVLARLARLRPQVDAFFDGVMVNADDPQLRANRLALLKKLGDRLGSVAAIEHLSS.

Belongs to the class-II aminoacyl-tRNA synthetase family. In terms of assembly, tetramer of two alpha and two beta subunits.

Its subcellular location is the cytoplasm. It catalyses the reaction tRNA(Gly) + glycine + ATP = glycyl-tRNA(Gly) + AMP + diphosphate. The chain is Glycine--tRNA ligase beta subunit from Xanthomonas campestris pv. campestris (strain B100).